The chain runs to 205 residues: Putative 3-methyladenine DNA glycosylase (205 aa).

It belongs to the DNA glycosylase MPG family.

In Bacillus cereus (strain ZK / E33L), this protein is Putative 3-methyladenine DNA glycosylase.